The chain runs to 341 residues: MESSWPAQSSFSYYNQGSMQTSSRHASSPTNEYSDRTPRRSAAQPQMPAFLPPPPPHGHQLTESGGDSLPSFSHSLYSPYHGPGGNLPSSNPHGMAHSMPSYSHISALSGTGSGFQYTNHSPMGLNEPLTSHSRSQITHSYHDPPRLPGYSSSPNLHQLSPVSPTAHLLPSMQPPSASPSSSSFPSSIPRTPATLPKGVKRHSLGSEQSFDSWDDEQEMSSGKVTGDRKHEKDSQPWGMPQEEYKKLNPKDKKQVRNRIGARRFRAKRKDYVNQLEAGIRLRDDEITNLQSQLESQRNEINELRLQLKLPLLPRGELSGLGLTMETQGQMERWENNDSMSR.

4 stretches are compositionally biased toward polar residues: residues 1 to 32, 61 to 76, 128 to 139, and 150 to 163; these read MESSWPAQSSFSYYNQGSMQTSSRHASSPTNE, LTESGGDSLPSFSHSL, PLTSHSRSQITH, and YSSSPNLHQLSPVS. Disordered stretches follow at residues 1–95 and 118–254; these read MESS…PHGM and TNHS…DKKQ. The span at 178 to 192 shows a compositional bias: low complexity; sequence SPSSSSFPSSIPRTP. Basic and acidic residues-rich tracts occupy residues 225–234 and 242–254; these read TGDRKHEKDS and EEYKKLNPKDKKQ. The tract at residues 250–269 is basic motif; that stretch reads KDKKQVRNRIGARRFRAKRK. Residues 250–308 form the bZIP domain; it reads KDKKQVRNRIGARRFRAKRKDYVNQLEAGIRLRDDEITNLQSQLESQRNEINELRLQLK. Residues 279–307 are leucine-zipper; sequence IRLRDDEITNLQSQLESQRNEINELRLQL.

Belongs to the bZIP family.

The protein resides in the nucleus. It is found in the cytoplasm. Functionally, transcription factor that promotes the production of melanin, a pigment that serves as antioxidant, reactive oxygen species (ROS) scavenger and that protect fungal pathogens from radiation and host immune responses. This chain is BZIP domain-containing transcription factor BZP4, found in Cryptococcus neoformans var. grubii serotype A (strain H99 / ATCC 208821 / CBS 10515 / FGSC 9487) (Filobasidiella neoformans var. grubii).